The sequence spans 110 residues: Protein mistic (110 aa).

Residues 1 to 7 are Cytoplasmic-facing; it reads MFCTFFE. Residues 8-22 form a helical membrane-spanning segment; it reads KHHRKWDILLEKSTG. Topologically, residues 23–31 are extracellular; it reads VMEAMKVTS. A helical transmembrane segment spans residues 32-55; it reads EEKEQLSTAIDRMNEGLDAFIQLY. The Cytoplasmic portion of the chain corresponds to 56 to 66; sequence NESEIDEPLIQ. The helical transmembrane segment at 67–81 threads the bilayer; the sequence is LDDDTAELMKQARDM. Topologically, residues 82 to 88 are extracellular; that stretch reads YGQEKLN. A helical membrane pass occupies residues 89 to 102; it reads EKLNTIIKQILSIS. Residues 103–110 lie on the Cytoplasmic side of the membrane; sequence VSEEGEKE.

Monomer.

It is found in the cell membrane. Chaperone that facilitates the production and integration of integral membrane proteins into the bacterial lipid bilayer. The sequence is that of Protein mistic (mstX) from Bacillus subtilis (strain 168).